Reading from the N-terminus, the 211-residue chain is Ribosome maturation factor RimM (211 aa).

Positions 111 to 182 (PDAWYDHQLV…TLVVTPPLGL (72 aa)) constitute a PRC barrel domain. A disordered region spans residues 184-211 (EEIPDETPTAEPTPAEAAEPAPEGDDAR). A compositionally biased stretch (low complexity) spans 189–204 (ETPTAEPTPAEAAEPA).

It belongs to the RimM family. As to quaternary structure, binds ribosomal protein uS19.

Its subcellular location is the cytoplasm. Functionally, an accessory protein needed during the final step in the assembly of 30S ribosomal subunit, possibly for assembly of the head region. Essential for efficient processing of 16S rRNA. May be needed both before and after RbfA during the maturation of 16S rRNA. It has affinity for free ribosomal 30S subunits but not for 70S ribosomes. The protein is Ribosome maturation factor RimM of Clavibacter michiganensis subsp. michiganensis (strain NCPPB 382).